The following is a 179-amino-acid chain: Exosome complex component Csl4 (179 aa).

The S1 motif domain maps to 58–137 (GDVVLGRVVD…RLSTKEEEMG (80 aa)). Positions 143, 146, 159, and 162 each coordinate Zn(2+).

This sequence belongs to the CSL4 family. In terms of assembly, component of the archaeal exosome complex. Forms a trimer of Rrp4 and/or Csl4 subunits. The trimer associates with a hexameric ring-like arrangement composed of 3 Rrp41-Rrp42 heterodimers. Interacts with DnaG.

It localises to the cytoplasm. Functionally, non-catalytic component of the exosome, which is a complex involved in RNA degradation. Increases the RNA binding and the efficiency of RNA degradation. Helpful for the interaction of the exosome with A-poor RNAs. The chain is Exosome complex component Csl4 from Archaeoglobus fulgidus (strain ATCC 49558 / DSM 4304 / JCM 9628 / NBRC 100126 / VC-16).